We begin with the raw amino-acid sequence, 107 residues long: U1-lycotoxin-Ls1q (107 aa).

A signal peptide spans 1–20 (MMKVLVVVALLVTLISYSSS). The propeptide occupies 21–41 (EGIDDLEADELLSLMANEQTR). Disulfide bonds link cysteine 44-cysteine 59, cysteine 51-cysteine 68, cysteine 58-cysteine 86, and cysteine 70-cysteine 84.

It belongs to the neurotoxin 19 (CSTX) family. 04 (U1-Lctx) subfamily. As to expression, expressed by the venom gland.

Its subcellular location is the secreted. This Lycosa singoriensis (Wolf spider) protein is U1-lycotoxin-Ls1q.